Consider the following 125-residue polypeptide: Glycine cleavage system H protein (125 aa).

Positions 22-104 (VATVGITIHA…EGEGWLFKLK (83 aa)) constitute a Lipoyl-binding domain. K63 is modified (N6-lipoyllysine).

It belongs to the GcvH family. As to quaternary structure, the glycine cleavage system is composed of four proteins: P, T, L and H. The cofactor is (R)-lipoate.

The glycine cleavage system catalyzes the degradation of glycine. The H protein shuttles the methylamine group of glycine from the P protein to the T protein. In Brucella abortus (strain 2308), this protein is Glycine cleavage system H protein.